We begin with the raw amino-acid sequence, 322 residues long: Ribonucleoside-diphosphate reductase small subunit (322 aa).

Asp70, Glu101, and His104 together coordinate Fe cation. Residue Tyr108 is part of the active site. Positions 163, 197, and 200 each coordinate Fe cation.

The protein belongs to the ribonucleoside diphosphate reductase small chain family. In terms of assembly, heterodimer of a large and a small subunit. It depends on Fe cation as a cofactor.

The catalysed reaction is a 2'-deoxyribonucleoside 5'-diphosphate + [thioredoxin]-disulfide + H2O = a ribonucleoside 5'-diphosphate + [thioredoxin]-dithiol. Provides the precursors necessary for DNA synthesis. Catalyzes the biosynthesis of deoxyribonucleotides from the corresponding ribonucleotides. In Plasmodium falciparum (isolate FCR-3 / Gambia), this protein is Ribonucleoside-diphosphate reductase small subunit (RNR2).